A 208-amino-acid polypeptide reads, in one-letter code: N-(5'-phosphoribosyl)anthranilate isomerase (208 aa).

Belongs to the TrpF family.

It carries out the reaction N-(5-phospho-beta-D-ribosyl)anthranilate = 1-(2-carboxyphenylamino)-1-deoxy-D-ribulose 5-phosphate. It participates in amino-acid biosynthesis; L-tryptophan biosynthesis; L-tryptophan from chorismate: step 3/5. This Chlamydia trachomatis serovar L2 (strain ATCC VR-902B / DSM 19102 / 434/Bu) protein is N-(5'-phosphoribosyl)anthranilate isomerase.